Consider the following 224-residue polypeptide: Ribosomal RNA small subunit methyltransferase G (224 aa).

S-adenosyl-L-methionine contacts are provided by residues Gly89, Phe94, 140–141, and Arg153; that span reads AE.

Belongs to the methyltransferase superfamily. RNA methyltransferase RsmG family.

The protein resides in the cytoplasm. Specifically methylates the N7 position of a guanine in 16S rRNA. The chain is Ribosomal RNA small subunit methyltransferase G from Bacteroides fragilis (strain YCH46).